Consider the following 2094-residue polypeptide: Non-reducing polyketide synthase ustP (2094 aa).

Residues 9-243 (VFGDLSVPYH…GKIQVGGLFH (235 aa)) are N-terminal acylcarrier protein transacylase (SAT) domain. Positions 357 to 377 (NTAGVDSSSRGSGHADAEKQP) are disordered. The Ketosynthase family 3 (KS3) domain maps to 379–813 (RSKIAIIGFS…GGNSSVLVED (435 aa)). Catalysis depends on for beta-ketoacyl synthase activity residues Cys-551, His-686, and His-727. Residues 914 to 1227 (FSFTGQGSQY…EDDCKIFTPA (314 aa)) are malonyl-CoA:ACP transacylase (MAT) domain. The active-site For acyl/malonyl transferase activity is Ser-1004. Positions 1305-1629 (TTSVQYITAE…QRKVLDLVLP (325 aa)) are product template (PT) domain. The interval 1308–1445 (VQYITAESYG…CSGFFTDKSR (138 aa)) is N-terminal hotdog fold. Residues 1308 to 1625 (VQYITAESYG…FAAVQRKVLD (318 aa)) enclose the PKS/mFAS DH domain. The Proton acceptor; for dehydratase activity role is filled by His-1341. The tract at residues 1473–1625 (GSVHMIKTGM…FAAVQRKVLD (153 aa)) is C-terminal hotdog fold. The Proton donor; for dehydratase activity role is filled by Asp-1536. The segment covering 1644-1671 (AAAAPSQRQQQQQQQQQQQPAQPVAASQ) has biased composition (low complexity). A disordered region spans residues 1644–1689 (AAAAPSQRQQQQQQQQQQQPAQPVAASQESGMDDMPPTLVPSEKKD). In terms of domain architecture, Carrier spans 1689-1763 (DVPSEKLKVI…ELVRHILGSS (75 aa)). Residue Ser-1723 is modified to O-(pantetheine 4'-phosphoryl)serine. Residues 1762 to 1778 (SSTPSSDSGPATPSITP) show a composition bias toward polar residues. A disordered region spans residues 1762–1782 (SSTPSSDSGPATPSITPLQEP). A claisen cyclase domain region spans residues 1844–2069 (KVWLFPDGSG…GVVEGAHHFS (226 aa)). The active-site For Claisen cyclase activity is Ser-1916.

The catalysed reaction is 6 malonyl-CoA + acetyl-CoA + 6 H(+) = naphtopyrone YWA1 + 6 CO2 + 7 CoA + H2O. It functions in the pathway secondary metabolite biosynthesis. Non-reducing polyketide synthase; part of the gene cluster that mediates the biosynthesis of ustilaginoidins, dimeric gamma-naphthopyrones isolated from different fungal species. The first step in the biosynthesis of ustilaginoidins is the production of gamma-naphthopyrone precursor YWA1 by the non-reducing polyketide synthase ustP, via condensation of one acetyl-CoA starter unit with 6 malonyl-CoA units. YWA1 is then probably substrate of the ustZ to yield norrubrofusarin via a dehydration reaction. A key enzyme in the biosynthetic pathway is the laccase ustL, which catalyzes the oxidative dimerization of norrubrofusarin to ustilaginoidin A. It can produce the M- and P-atropisomers in varying amounts, depending on the reaction conditions. For the biosynthesis of 3-methylustilaginoid in derivatives such as chaetochromin A, a methylated derivative of YWA1 is required. The C-methylation is considered to be catalyzed by ustM, the phosphopantetheine attachment site of which indicates that it acts on the growing polyketide chain before release of the product. For the biosynthesis of chaetochromin A, it is assumed that saturation of the D2 double bond takes place before dimerization, and is probably catalyzed by an external reductase because no candidate gene was identified within the cluster. The chain is Non-reducing polyketide synthase ustP from Ustilaginoidea virens (Rice false smut fungus).